The sequence spans 426 residues: 3-phosphoshikimate 1-carboxyvinyltransferase (426 aa).

3 residues coordinate 3-phosphoshikimate: lysine 22, serine 23, and arginine 27. Residue lysine 22 coordinates phosphoenolpyruvate. Phosphoenolpyruvate is bound by residues glycine 96 and arginine 124. Serine 170, serine 171, glutamine 172, serine 198, aspartate 314, asparagine 337, and lysine 341 together coordinate 3-phosphoshikimate. Residue glutamine 172 coordinates phosphoenolpyruvate. Aspartate 314 functions as the Proton acceptor in the catalytic mechanism. Arginine 345, arginine 387, and lysine 412 together coordinate phosphoenolpyruvate.

This sequence belongs to the EPSP synthase family. Monomer.

It is found in the cytoplasm. It catalyses the reaction 3-phosphoshikimate + phosphoenolpyruvate = 5-O-(1-carboxyvinyl)-3-phosphoshikimate + phosphate. It functions in the pathway metabolic intermediate biosynthesis; chorismate biosynthesis; chorismate from D-erythrose 4-phosphate and phosphoenolpyruvate: step 6/7. Its function is as follows. Catalyzes the transfer of the enolpyruvyl moiety of phosphoenolpyruvate (PEP) to the 5-hydroxyl of shikimate-3-phosphate (S3P) to produce enolpyruvyl shikimate-3-phosphate and inorganic phosphate. This Shewanella sediminis (strain HAW-EB3) protein is 3-phosphoshikimate 1-carboxyvinyltransferase.